A 461-amino-acid chain; its full sequence is Cysteine--tRNA ligase (461 aa).

Position 28 (Cys-28) interacts with Zn(2+). The 'HIGH' region motif lies at Ile-30 to His-40. Positions 209, 234, and 238 each coordinate Zn(2+). A 'KMSKS' region motif is present at residues Lys-266 to Ser-270. Lys-269 contacts ATP.

Belongs to the class-I aminoacyl-tRNA synthetase family. In terms of assembly, monomer. Zn(2+) serves as cofactor.

The protein localises to the cytoplasm. It carries out the reaction tRNA(Cys) + L-cysteine + ATP = L-cysteinyl-tRNA(Cys) + AMP + diphosphate. The chain is Cysteine--tRNA ligase from Salmonella dublin (strain CT_02021853).